Here is a 1372-residue protein sequence, read N- to C-terminus: DNA-directed RNA polymerase subunit beta'' (1372 aa).

C252, C321, C328, and C331 together coordinate Zn(2+).

It belongs to the RNA polymerase beta' chain family. RpoC2 subfamily. In plastids the minimal PEP RNA polymerase catalytic core is composed of four subunits: alpha, beta, beta', and beta''. When a (nuclear-encoded) sigma factor is associated with the core the holoenzyme is formed, which can initiate transcription. Zn(2+) serves as cofactor.

The protein localises to the plastid. It localises to the organellar chromatophore. The catalysed reaction is RNA(n) + a ribonucleoside 5'-triphosphate = RNA(n+1) + diphosphate. Functionally, DNA-dependent RNA polymerase catalyzes the transcription of DNA into RNA using the four ribonucleoside triphosphates as substrates. The polypeptide is DNA-directed RNA polymerase subunit beta'' (Paulinella chromatophora).